A 157-amino-acid polypeptide reads, in one-letter code: SsrA-binding protein (157 aa).

A disordered region spans residues 133-157 (HDKRNSIKEREGKREVERALKSRSR).

The protein belongs to the SmpB family.

The protein localises to the cytoplasm. In terms of biological role, required for rescue of stalled ribosomes mediated by trans-translation. Binds to transfer-messenger RNA (tmRNA), required for stable association of tmRNA with ribosomes. tmRNA and SmpB together mimic tRNA shape, replacing the anticodon stem-loop with SmpB. tmRNA is encoded by the ssrA gene; the 2 termini fold to resemble tRNA(Ala) and it encodes a 'tag peptide', a short internal open reading frame. During trans-translation Ala-aminoacylated tmRNA acts like a tRNA, entering the A-site of stalled ribosomes, displacing the stalled mRNA. The ribosome then switches to translate the ORF on the tmRNA; the nascent peptide is terminated with the 'tag peptide' encoded by the tmRNA and targeted for degradation. The ribosome is freed to recommence translation, which seems to be the essential function of trans-translation. This is SsrA-binding protein from Verminephrobacter eiseniae (strain EF01-2).